The sequence spans 193 residues: Holliday junction branch migration complex subunit RuvA (193 aa).

Positions 1–64 (MIGRIAGILL…EDAHLLYGFL (64 aa)) are domain I. Residues 65 to 139 (TPQERTTFRE…GKLGADLGAL (75 aa)) form a domain II region. Positions 139-143 (LAGAA) are flexible linker. A domain III region spans residues 144 to 193 (SASDHATDILNALLALGYSEKEGLAAIKNVPAGTGVSEGIKLALKALSKA).

It belongs to the RuvA family. As to quaternary structure, homotetramer. Forms an RuvA(8)-RuvB(12)-Holliday junction (HJ) complex. HJ DNA is sandwiched between 2 RuvA tetramers; dsDNA enters through RuvA and exits via RuvB. An RuvB hexamer assembles on each DNA strand where it exits the tetramer. Each RuvB hexamer is contacted by two RuvA subunits (via domain III) on 2 adjacent RuvB subunits; this complex drives branch migration. In the full resolvosome a probable DNA-RuvA(4)-RuvB(12)-RuvC(2) complex forms which resolves the HJ.

The protein localises to the cytoplasm. The RuvA-RuvB-RuvC complex processes Holliday junction (HJ) DNA during genetic recombination and DNA repair, while the RuvA-RuvB complex plays an important role in the rescue of blocked DNA replication forks via replication fork reversal (RFR). RuvA specifically binds to HJ cruciform DNA, conferring on it an open structure. The RuvB hexamer acts as an ATP-dependent pump, pulling dsDNA into and through the RuvAB complex. HJ branch migration allows RuvC to scan DNA until it finds its consensus sequence, where it cleaves and resolves the cruciform DNA. This is Holliday junction branch migration complex subunit RuvA from Burkholderia cenocepacia (strain HI2424).